Consider the following 234-residue polypeptide: tRNA (guanine-N(1)-)-methyltransferase (234 aa).

S-adenosyl-L-methionine contacts are provided by residues glycine 115 and 135 to 140; that span reads VGDYIL.

Belongs to the RNA methyltransferase TrmD family. In terms of assembly, homodimer.

The protein resides in the cytoplasm. The catalysed reaction is guanosine(37) in tRNA + S-adenosyl-L-methionine = N(1)-methylguanosine(37) in tRNA + S-adenosyl-L-homocysteine + H(+). Functionally, specifically methylates guanosine-37 in various tRNAs. The protein is tRNA (guanine-N(1)-)-methyltransferase of Rickettsia rickettsii (strain Iowa).